We begin with the raw amino-acid sequence, 404 residues long: S-adenosylmethionine synthase (404 aa).

141–146 (GQGSVD) provides a ligand contact to ATP.

It belongs to the AdoMet synthase 2 family. The cofactor is Mg(2+).

It catalyses the reaction L-methionine + ATP + H2O = S-adenosyl-L-methionine + phosphate + diphosphate. Its pathway is amino-acid biosynthesis; S-adenosyl-L-methionine biosynthesis; S-adenosyl-L-methionine from L-methionine: step 1/1. Its function is as follows. Catalyzes the formation of S-adenosylmethionine from methionine and ATP. The sequence is that of S-adenosylmethionine synthase from Methanococcus vannielii (strain ATCC 35089 / DSM 1224 / JCM 13029 / OCM 148 / SB).